Reading from the N-terminus, the 510-residue chain is NAD(P)H-quinone oxidoreductase subunit 2, chloroplastic (510 aa).

Transmembrane regions (helical) follow at residues 24-44, 59-79, 99-119, 124-144, 149-169, 184-204, 229-249, 295-315, 323-343, 347-367, 395-415, and 418-438; these read LLLF…GLIL, WFYF…LFRW, IFQF…VEYI, MAIT…MFLC, LITI…LSGY, LLMG…LYGL, ISIA…PAPF, WHLL…LIAI, MLAY…IVGD, GYAS…GTFA, ALSL…AGFF, and LHLF…IGLL.

This sequence belongs to the complex I subunit 2 family. In terms of assembly, NDH is composed of at least 16 different subunits, 5 of which are encoded in the nucleus.

The protein localises to the plastid. Its subcellular location is the chloroplast thylakoid membrane. It catalyses the reaction a plastoquinone + NADH + (n+1) H(+)(in) = a plastoquinol + NAD(+) + n H(+)(out). The enzyme catalyses a plastoquinone + NADPH + (n+1) H(+)(in) = a plastoquinol + NADP(+) + n H(+)(out). Functionally, NDH shuttles electrons from NAD(P)H:plastoquinone, via FMN and iron-sulfur (Fe-S) centers, to quinones in the photosynthetic chain and possibly in a chloroplast respiratory chain. The immediate electron acceptor for the enzyme in this species is believed to be plastoquinone. Couples the redox reaction to proton translocation, and thus conserves the redox energy in a proton gradient. This is NAD(P)H-quinone oxidoreductase subunit 2, chloroplastic from Muilla maritima (Sea muilla).